We begin with the raw amino-acid sequence, 214 residues long: Guanylate kinase (214 aa).

One can recognise a Guanylate kinase-like domain in the interval 6 to 192; the sequence is GTLYIISAPS…ALEDLKAIFR (187 aa). 13 to 20 lines the ATP pocket; sequence APSGAGKT.

This sequence belongs to the guanylate kinase family.

Its subcellular location is the cytoplasm. The catalysed reaction is GMP + ATP = GDP + ADP. Functionally, essential for recycling GMP and indirectly, cGMP. The polypeptide is Guanylate kinase (Pseudomonas savastanoi pv. phaseolicola (strain 1448A / Race 6) (Pseudomonas syringae pv. phaseolicola (strain 1448A / Race 6))).